A 66-amino-acid chain; its full sequence is MFKEYKIYKFFEQVKQETYKVVWPTRKELVASTLVVVVAVFIFSLICLVLDYSIHNIMQLLLNIGK.

A helical membrane pass occupies residues 29 to 49; sequence LVASTLVVVVAVFIFSLICLV.

Belongs to the SecE/SEC61-gamma family. Component of the Sec protein translocase complex. Heterotrimer consisting of SecY, SecE and SecG subunits. The heterotrimers can form oligomers, although 1 heterotrimer is thought to be able to translocate proteins. Interacts with the ribosome. Interacts with SecDF, and other proteins may be involved. Interacts with SecA.

The protein resides in the cell inner membrane. Functionally, essential subunit of the Sec protein translocation channel SecYEG. Clamps together the 2 halves of SecY. May contact the channel plug during translocation. The protein is Protein translocase subunit SecE of Rickettsia felis (strain ATCC VR-1525 / URRWXCal2) (Rickettsia azadi).